A 102-amino-acid polypeptide reads, in one-letter code: Small ribosomal subunit protein uS10 (102 aa).

The segment at 30–58 is disordered; that stretch reads TGVNLSGPIPLPTKTLEIPTRKSPDGEGT.

Belongs to the universal ribosomal protein uS10 family. In terms of assembly, part of the 30S ribosomal subunit.

Functionally, involved in the binding of tRNA to the ribosomes. In Haloquadratum walsbyi (strain DSM 16790 / HBSQ001), this protein is Small ribosomal subunit protein uS10.